Here is a 101-residue protein sequence, read N- to C-terminus: MSNNPNNSGQPNKTQSILQEVDKVKDVMHNNIGLMLNNHDKASNLQDKTASMSNNARLFKKQTVTIRRQMWCRNMKLQLIIIAVVILVLAVILIPIIMKFV.

The Cytoplasmic segment spans residues 1-76 (MSNNPNNSGQ…RRQMWCRNMK (76 aa)). The v-SNARE coiled-coil homology domain occupies 13–73 (KTQSILQEVD…VTIRRQMWCR (61 aa)). The chain crosses the membrane as a helical; Anchor for type IV membrane protein span at residues 77-97 (LQLIIIAVVILVLAVILIPII). Over 98-101 (MKFV) the chain is Vesicular.

It belongs to the synaptobrevin family.

It localises to the cytoplasmic vesicle. Its subcellular location is the secretory vesicle membrane. Its function is as follows. Involved in the targeting and/or fusion of transport vesicles to their target membrane. This Dictyostelium discoideum (Social amoeba) protein is Synaptobrevin-B (sybB).